The following is a 526-amino-acid chain: Efflux pump aunC (526 aa).

14 consecutive transmembrane segments (helical) span residues 23–43, 64–84, 89–109, 125–145, 155–175, 183–203, 218–238, 254–274, 296–316, 339–359, 360–380, 386–406, 418–438, and 491–511; these read LCYK…CTSL, DVGW…LPFG, FFPI…GSFI, VAGL…TQCV, GFIM…GGAF, WCFY…FFTF, AAGL…CLLL, IIAL…LQLW, LYGF…PIWF, VIFA…GPFM, LLSA…HPSS, IGYQ…PVFV, TATA…VSVA, and VHTF…ATVI.

The protein belongs to the major facilitator superfamily. TCR/Tet family.

Its subcellular location is the cell membrane. Its function is as follows. Efflux pump; part of the gene cluster that mediates the biosynthesis of aurasperone B, a dimeric gamma-naphthopyrone. This is Efflux pump aunC from Aspergillus niger (strain ATCC 1015 / CBS 113.46 / FGSC A1144 / LSHB Ac4 / NCTC 3858a / NRRL 328 / USDA 3528.7).